The primary structure comprises 439 residues: 3-phosphoshikimate 1-carboxyvinyltransferase (439 aa).

The 3-phosphoshikimate site is built by K25, S26, and R30. Phosphoenolpyruvate is bound at residue K25. The phosphoenolpyruvate site is built by G96 and R124. Positions 170, 171, 172, 202, 324, and 351 each coordinate 3-phosphoshikimate. Q172 contacts phosphoenolpyruvate. The Proton acceptor role is filled by D324. Residues R355, R399, and K424 each contribute to the phosphoenolpyruvate site.

The protein belongs to the EPSP synthase family. In terms of assembly, monomer.

The protein localises to the cytoplasm. The enzyme catalyses 3-phosphoshikimate + phosphoenolpyruvate = 5-O-(1-carboxyvinyl)-3-phosphoshikimate + phosphate. It functions in the pathway metabolic intermediate biosynthesis; chorismate biosynthesis; chorismate from D-erythrose 4-phosphate and phosphoenolpyruvate: step 6/7. Catalyzes the transfer of the enolpyruvyl moiety of phosphoenolpyruvate (PEP) to the 5-hydroxyl of shikimate-3-phosphate (S3P) to produce enolpyruvyl shikimate-3-phosphate and inorganic phosphate. This Bordetella avium (strain 197N) protein is 3-phosphoshikimate 1-carboxyvinyltransferase.